The sequence spans 178 residues: Caveolin-1 (178 aa).

Serine 2 carries the post-translational modification N-acetylserine. Serine 2 carries the post-translational modification Phosphoserine. The tract at residues serine 2–valine 94 is required for homooligomerization. The Cytoplasmic segment spans residues serine 2–serine 104. At lysine 5 the chain carries N6-acetyllysine; alternate. Lysine 5 is covalently cross-linked (Glycyl lysine isopeptide (Lys-Gly) (interchain with G-Cter in ubiquitin); alternate). Phosphotyrosine is present on tyrosine 6. Serine 9 is subject to Phosphoserine. Tyrosine 14 is modified (phosphotyrosine; by ABL1). Tyrosine 25 is modified (phosphotyrosine). Glycyl lysine isopeptide (Lys-Gly) (interchain with G-Cter in ubiquitin) cross-links involve residues lysine 26, lysine 39, lysine 47, and lysine 57. The interaction with CAVIN3 stretch occupies residues aspartate 82–valine 94. The segment at residues alanine 105–leucine 125 is an intramembrane region (helical). At histidine 126–isoleucine 178 the chain is on the cytoplasmic side. Residues valine 131–glutamine 142 form an interacts with SPRY1, SPRY2, SPRY3 and SPRY4 region. S-palmitoyl cysteine attachment occurs at residues cysteine 133, cysteine 143, and cysteine 156. The interval serine 149 to phenylalanine 160 is interacts with SPRY1, SPRY2, and SPRY4. The segment at phenylalanine 167 to isoleucine 178 is interacts with SPRY1, SPRY2, SPRY3 and SPRY4.

It belongs to the caveolin family. Homooligomer. Interacts with GLIPR2. Interacts with NOSTRIN. Interacts with SNAP25 and STX1A. Interacts (via the N-terminus) with DPP4; the interaction is direct. Interacts with CTNNB1, CDH1 and JUP. Interacts with PACSIN2; this interaction induces membrane tubulation. Interacts with SLC7A9. Interacts with BMX and BTK. Interacts with TGFBR1. Interacts with CAVIN3 (via leucine-zipper domain) in a cholesterol-sensitive manner. Interacts with CAVIN1. Interacts with EHD2 in a cholesterol-dependent manner. Forms a ternary complex with UBXN6 and VCP; mediates CAV1 targeting to lysosomes for degradation. Interacts with ABCG1; this interaction regulates ABCG1-mediated cholesterol efflux. Interacts with NEU3; this interaction enhances NEU3 sialidase activity within caveola. Interacts (via C-terminus) with SPRY1, SPRY2 (via C-terminus), SPRY3, and SPRY4. Interacts with IGFBP5; this interaction allows trafficking of IGFBP5 from the plasma membrane to the nucleus. Post-translationally, phosphorylated at Tyr-14 by ABL1 in response to oxidative stress. Ubiquitinated. Undergo monoubiquitination and multi- and/or polyubiquitination. Monoubiquitination of N-terminal lysines promotes integration in a ternary complex with UBXN6 and VCP which promotes oligomeric CAV1 targeting to lysosomes for degradation. Ubiquitinated by ZNRF1; leading to degradation and modulation of the TLR4-mediated immune response.

It localises to the golgi apparatus membrane. The protein resides in the cell membrane. It is found in the membrane. The protein localises to the caveola. Its subcellular location is the membrane raft. In terms of biological role, may act as a scaffolding protein within caveolar membranes. Forms a stable heterooligomeric complex with CAV2 that targets to lipid rafts and drives caveolae formation. Mediates the recruitment of CAVIN proteins (CAVIN1/2/3/4) to the caveolae. Interacts directly with G-protein alpha subunits and can functionally regulate their activity. Involved in the costimulatory signal essential for T-cell receptor (TCR)-mediated T-cell activation. Its binding to DPP4 induces T-cell proliferation and NF-kappa-B activation in a T-cell receptor/CD3-dependent manner. Recruits CTNNB1 to caveolar membranes and may regulate CTNNB1-mediated signaling through the Wnt pathway. Negatively regulates TGFB1-mediated activation of SMAD2/3 by mediating the internalization of TGFBR1 from membrane rafts leading to its subsequent degradation. Binds 20(S)-hydroxycholesterol (20(S)-OHC). In Loxodonta africana (African elephant), this protein is Caveolin-1 (CAV1).